A 118-amino-acid polypeptide reads, in one-letter code: Non-specific lipid-transfer protein 3 (118 aa).

The N-terminal stretch at 1 to 25 is a signal peptide; it reads MARAAATQLVLVAMVAAMLLVATDA. Intrachain disulfides connect cysteine 29-cysteine 77, cysteine 39-cysteine 54, cysteine 55-cysteine 100, and cysteine 75-cysteine 114.

The protein belongs to the plant LTP family.

Plant non-specific lipid-transfer proteins transfer phospholipids as well as galactolipids across membranes. May play a role in wax or cutin deposition in the cell walls of expanding epidermal cells and certain secretory tissues. The polypeptide is Non-specific lipid-transfer protein 3 (LTP3) (Hordeum vulgare (Barley)).